Consider the following 214-residue polypeptide: ATP phosphoribosyltransferase (214 aa).

Belongs to the ATP phosphoribosyltransferase family. Short subfamily. As to quaternary structure, heteromultimer composed of HisG and HisZ subunits.

The protein resides in the cytoplasm. The catalysed reaction is 1-(5-phospho-beta-D-ribosyl)-ATP + diphosphate = 5-phospho-alpha-D-ribose 1-diphosphate + ATP. It participates in amino-acid biosynthesis; L-histidine biosynthesis; L-histidine from 5-phospho-alpha-D-ribose 1-diphosphate: step 1/9. In terms of biological role, catalyzes the condensation of ATP and 5-phosphoribose 1-diphosphate to form N'-(5'-phosphoribosyl)-ATP (PR-ATP). Has a crucial role in the pathway because the rate of histidine biosynthesis seems to be controlled primarily by regulation of HisG enzymatic activity. In Methylobacillus flagellatus (strain ATCC 51484 / DSM 6875 / VKM B-1610 / KT), this protein is ATP phosphoribosyltransferase.